We begin with the raw amino-acid sequence, 261 residues long: Indole-3-glycerol phosphate synthase (261 aa).

The protein belongs to the TrpC family.

The catalysed reaction is 1-(2-carboxyphenylamino)-1-deoxy-D-ribulose 5-phosphate + H(+) = (1S,2R)-1-C-(indol-3-yl)glycerol 3-phosphate + CO2 + H2O. Its pathway is amino-acid biosynthesis; L-tryptophan biosynthesis; L-tryptophan from chorismate: step 4/5. The protein is Indole-3-glycerol phosphate synthase of Campylobacter concisus (strain 13826).